Consider the following 567-residue polypeptide: 2-succinyl-5-enolpyruvyl-6-hydroxy-3-cyclohexene-1-carboxylate synthase (567 aa).

It belongs to the TPP enzyme family. MenD subfamily. Homodimer. Mg(2+) is required as a cofactor. The cofactor is Mn(2+). Requires thiamine diphosphate as cofactor.

It carries out the reaction isochorismate + 2-oxoglutarate + H(+) = 5-enolpyruvoyl-6-hydroxy-2-succinyl-cyclohex-3-ene-1-carboxylate + CO2. The protein operates within quinol/quinone metabolism; 1,4-dihydroxy-2-naphthoate biosynthesis; 1,4-dihydroxy-2-naphthoate from chorismate: step 2/7. It participates in quinol/quinone metabolism; menaquinone biosynthesis. Its function is as follows. Catalyzes the thiamine diphosphate-dependent decarboxylation of 2-oxoglutarate and the subsequent addition of the resulting succinic semialdehyde-thiamine pyrophosphate anion to isochorismate to yield 2-succinyl-5-enolpyruvyl-6-hydroxy-3-cyclohexene-1-carboxylate (SEPHCHC). In Yersinia pseudotuberculosis serotype I (strain IP32953), this protein is 2-succinyl-5-enolpyruvyl-6-hydroxy-3-cyclohexene-1-carboxylate synthase.